The sequence spans 389 residues: Xylose isomerase (389 aa).

Active-site residues include His-101 and Asp-104. The Mg(2+) site is built by Glu-232, Glu-268, His-271, Asp-296, Asp-307, and Asp-309.

This sequence belongs to the xylose isomerase family. In terms of assembly, homotetramer. Mg(2+) serves as cofactor.

It is found in the cytoplasm. The enzyme catalyses alpha-D-xylose = alpha-D-xylulofuranose. This is Xylose isomerase from Lactococcus lactis subsp. cremoris (strain SK11).